Consider the following 135-residue polypeptide: Cilia- and flagella-associated protein 144 (135 aa).

Positions 76-100 (QGPKKKYSETQTEAQEIGWDPNPLI) are disordered.

This sequence belongs to the CFAP144 family. As to quaternary structure, microtubule inner protein component of sperm flagellar doublet microtubules. In terms of tissue distribution, predominantly expressed in tissues containing motile cilia.

The protein resides in the cytoplasm. Its subcellular location is the cytoskeleton. It localises to the cilium axoneme. The protein localises to the flagellum axoneme. In Mus musculus (Mouse), this protein is Cilia- and flagella-associated protein 144.